Reading from the N-terminus, the 413-residue chain is Divalent metal cation transporter MntH (413 aa).

Over 1-19 (MTDNRVENSSGRAARKLRL) the chain is Cytoplasmic. Residues 20 to 39 (ALMGPAFIAAIGYIDPGNFA) traverse the membrane as a helical segment. Residues 40–51 (TNIQAGASFGYQ) are Periplasmic-facing. The chain crosses the membrane as a helical span at residues 52–71 (LLWVVVWANLMAMLIQILSA). Residues 72 to 95 (KLGIATGKNLAEQIRDHYPRPVVW) are Cytoplasmic-facing. The chain crosses the membrane as a helical span at residues 96-118 (FYWVQAEIIAMATDLAEFIGAAI). Residues 119–125 (GFKLILG) are Periplasmic-facing. Residues 126 to 145 (VSLLQGAVLTGIATFLILML) traverse the membrane as a helical segment. At 146-155 (QRRGQKPLEK) the chain is on the cytoplasmic side. The chain crosses the membrane as a helical span at residues 156–175 (VIGGLLLFVAAAYIVELFFS). At 176–196 (QPDMAQLGKGMVIPALPNPEA) the chain is on the periplasmic side. A helical transmembrane segment spans residues 197–220 (VFLAAGVLGATIMPHVIYLHSSLT). Residues 221-238 (QHLHGGTRQQRYSATKWD) are Cytoplasmic-facing. A helical transmembrane segment spans residues 239–258 (VAIAMTIAGFVNLAMMATAA). Residues 259-276 (AAFHFSGHTGIADLDQAY) are Periplasmic-facing. A helical membrane pass occupies residues 277–297 (LTLEPLLSHAAATVFGLSLVA). The Cytoplasmic segment spans residues 298 to 327 (AGLSSTVVGTLAGQVVMQGFVRFHIPLWVR). A helical transmembrane segment spans residues 328–344 (RTITMLPSFIVILMGLD). Residues 345-350 (PTRILV) are Periplasmic-facing. The helical transmembrane segment at 351-370 (MSQVLLSFGIALALVPLLIF) threads the bilayer. Topologically, residues 371–387 (TSNATLMGELVNTRRVK) are cytoplasmic. Residues 388–406 (QVGWIIVVLVVALNIWLLV) form a helical membrane-spanning segment. Over 407 to 413 (GTVMGLS) the chain is Periplasmic.

The protein belongs to the NRAMP family.

It localises to the cell inner membrane. Functionally, h(+)-stimulated, divalent metal cation uptake system. The sequence is that of Divalent metal cation transporter MntH from Salmonella paratyphi C (strain RKS4594).